The primary structure comprises 225 residues: uncharacterized protein (225 aa).

A helical membrane pass occupies residues 2–22 (TIFYLVFIAVIIIIILYVLYL). N-linked (GlcNAc...) asparagine; by host glycosylation occurs at Asn73. Residues 114-146 (DYEDNYFNSNWNLKQLKNQLENLLREKNYKMVL) are a coiled coil. A glycan (N-linked (GlcNAc...) asparagine; by host) is linked at Asn222.

Its subcellular location is the membrane. This is an uncharacterized protein from Acanthamoeba polyphaga (Amoeba).